Consider the following 505-residue polypeptide: MAWENVRVRVAPSPTGDPHVGTAYMALFNEIFAKRFNGKMILRIEDTDQTRSRDDYEKNIFSALQWCGIQWDEGPDIGGPHGPYRQSERTEIYREYAELLLKTDYAYKCFATPKELEEMRAVATTLGYRGGYDRRYRYLSPEEIEARTQEGQPYTIRLKVPLTGECVLEDYCKGRVVFPWADVDDQVLMKSDGFPTYHFANVVDDHLMGITHVLRGEEWLSSTPKHLLLYEAFGWEPPIFLHMPLLLNPDGTKLSKRKNPTSIFYYRDAGYIKEAFMNFLTLMGYSMEGDEEVYSLEKLIANFDPKRIGKSGAVFDVRKLDWMNKHYLNHEGSPENLLARLKDWLVNDEFLLKILPLCQSRMATLAEFVGLSEFFFSVLPEYSKEELLPAAISQEKAAILFYSYVKYLEKTDLWVKDQFYLGSKWLSEAFQVHHKKVVIPLLYVAITGKKQGLPLFDSMELLGKPRTRMRMVHAQNLLGGVPKKIQTAIDKVLKEENFENKILEF.

The short motif at Pro-12 to Thr-22 is the 'HIGH' region element. A 'KMSKS' region motif is present at residues Lys-253–Arg-257. Lys-256 contacts ATP.

It belongs to the class-I aminoacyl-tRNA synthetase family. Glutamate--tRNA ligase type 1 subfamily. In terms of assembly, monomer.

It localises to the cytoplasm. It catalyses the reaction tRNA(Glu) + L-glutamate + ATP = L-glutamyl-tRNA(Glu) + AMP + diphosphate. Functionally, catalyzes the attachment of glutamate to tRNA(Glu) in a two-step reaction: glutamate is first activated by ATP to form Glu-AMP and then transferred to the acceptor end of tRNA(Glu). This is Glutamate--tRNA ligase from Chlamydia caviae (strain ATCC VR-813 / DSM 19441 / 03DC25 / GPIC) (Chlamydophila caviae).